A 157-amino-acid chain; its full sequence is Cytochrome c-type biogenesis protein CcmE (157 aa).

At 1–8 (MNPLRRKR) the chain is on the cytoplasmic side. A helical; Signal-anchor for type II membrane protein transmembrane segment spans residues 9–29 (LLIILAVLGGVGLALTLALSA). Over 30 to 157 (LKENINLFYT…ASMPARQADR (128 aa)) the chain is Periplasmic. Heme is bound by residues histidine 124 and tyrosine 128. Residues 132-157 (EVSKALRESGQATPAPASMPARQADR) are disordered.

It belongs to the CcmE/CycJ family.

It localises to the cell inner membrane. Heme chaperone required for the biogenesis of c-type cytochromes. Transiently binds heme delivered by CcmC and transfers the heme to apo-cytochromes in a process facilitated by CcmF and CcmH. This Pseudomonas syringae pv. tomato (strain ATCC BAA-871 / DC3000) protein is Cytochrome c-type biogenesis protein CcmE.